The following is a 660-amino-acid chain: Bifunctional polymyxin resistance protein ArnA (660 aa).

Residues 1-304 (MKAIVFAYHD…EMGIVTDVRL (304 aa)) are formyltransferase ArnAFT. His104 functions as the Proton donor; for formyltransferase activity in the catalytic mechanism. (6R)-10-formyltetrahydrofolate-binding positions include Arg114 and 136-140 (VKRPD). The interval 314-660 (RRTRVLILGV…RTTVQEGDGA (347 aa)) is dehydrogenase ArnADH. NAD(+) contacts are provided by residues Asp347 and 368–369 (DI). UDP-alpha-D-glucuronate contacts are provided by residues Ala393, Tyr398, and 432–433 (TS). The active-site Proton acceptor; for decarboxylase activity is the Glu434. Residues Arg460, Asn492, 526-535 (KLMDGGAQKR), and Tyr613 contribute to the UDP-alpha-D-glucuronate site. The Proton donor; for decarboxylase activity role is filled by Arg619.

It in the N-terminal section; belongs to the Fmt family. UDP-L-Ara4N formyltransferase subfamily. The protein in the C-terminal section; belongs to the NAD(P)-dependent epimerase/dehydratase family. UDP-glucuronic acid decarboxylase subfamily. As to quaternary structure, homohexamer, formed by a dimer of trimers.

It carries out the reaction UDP-alpha-D-glucuronate + NAD(+) = UDP-beta-L-threo-pentopyranos-4-ulose + CO2 + NADH. The enzyme catalyses UDP-4-amino-4-deoxy-beta-L-arabinose + (6R)-10-formyltetrahydrofolate = UDP-4-deoxy-4-formamido-beta-L-arabinose + (6S)-5,6,7,8-tetrahydrofolate + H(+). Its pathway is nucleotide-sugar biosynthesis; UDP-4-deoxy-4-formamido-beta-L-arabinose biosynthesis; UDP-4-deoxy-4-formamido-beta-L-arabinose from UDP-alpha-D-glucuronate: step 1/3. It participates in nucleotide-sugar biosynthesis; UDP-4-deoxy-4-formamido-beta-L-arabinose biosynthesis; UDP-4-deoxy-4-formamido-beta-L-arabinose from UDP-alpha-D-glucuronate: step 3/3. It functions in the pathway bacterial outer membrane biogenesis; lipopolysaccharide biosynthesis. Functionally, bifunctional enzyme that catalyzes the oxidative decarboxylation of UDP-glucuronic acid (UDP-GlcUA) to UDP-4-keto-arabinose (UDP-Ara4O) and the addition of a formyl group to UDP-4-amino-4-deoxy-L-arabinose (UDP-L-Ara4N) to form UDP-L-4-formamido-arabinose (UDP-L-Ara4FN). The modified arabinose is attached to lipid A and is required for resistance to polymyxin and cationic antimicrobial peptides. This Serratia proteamaculans (strain 568) protein is Bifunctional polymyxin resistance protein ArnA.